The chain runs to 369 residues: Phenylalanine--tRNA ligase alpha subunit (369 aa).

Position 269 (Glu-269) interacts with Mg(2+).

Belongs to the class-II aminoacyl-tRNA synthetase family. Phe-tRNA synthetase alpha subunit type 1 subfamily. In terms of assembly, tetramer of two alpha and two beta subunits. The cofactor is Mg(2+).

The protein resides in the cytoplasm. The catalysed reaction is tRNA(Phe) + L-phenylalanine + ATP = L-phenylalanyl-tRNA(Phe) + AMP + diphosphate + H(+). The protein is Phenylalanine--tRNA ligase alpha subunit of Brucella abortus (strain 2308).